The primary structure comprises 285 residues: Ribosomal RNA small subunit methyltransferase A (285 aa).

Asn-29, Leu-31, Gly-56, Glu-77, Asp-102, and Asn-123 together coordinate S-adenosyl-L-methionine.

The protein belongs to the class I-like SAM-binding methyltransferase superfamily. rRNA adenine N(6)-methyltransferase family. RsmA subfamily.

It is found in the cytoplasm. The enzyme catalyses adenosine(1518)/adenosine(1519) in 16S rRNA + 4 S-adenosyl-L-methionine = N(6)-dimethyladenosine(1518)/N(6)-dimethyladenosine(1519) in 16S rRNA + 4 S-adenosyl-L-homocysteine + 4 H(+). Its function is as follows. Specifically dimethylates two adjacent adenosines (A1518 and A1519) in the loop of a conserved hairpin near the 3'-end of 16S rRNA in the 30S particle. May play a critical role in biogenesis of 30S subunits. The sequence is that of Ribosomal RNA small subunit methyltransferase A from Clostridium perfringens (strain ATCC 13124 / DSM 756 / JCM 1290 / NCIMB 6125 / NCTC 8237 / Type A).